We begin with the raw amino-acid sequence, 102 residues long: UV-induced protein uvi31 (102 aa).

This sequence belongs to the BolA/IbaG family.

The protein localises to the mitochondrion matrix. The protein resides in the cytoplasm. Its subcellular location is the nucleus. Its function is as follows. Acts as a mitochondrial iron-sulfur (Fe-S) cluster assembly factor that facilitates [4Fe-4S] cluster insertion into a subset of mitochondrial proteins such as lipoyl synthase (LS) and succinate dehydrogenase (SDH). Required during the last step of iron-sulfur protein assembly when the iron-sulfur cluster is inserted into the target protein. Probably acts together with the monothiol glutaredoxin grx5. Not required for [2Fe-2S] cluster insertion into mitochondrial proteins. May be involved in control of cell division, especially during the resumption from cell cycle arrest. This is UV-induced protein uvi31 from Schizosaccharomyces pombe (strain 972 / ATCC 24843) (Fission yeast).